Consider the following 203-residue polypeptide: Holliday junction branch migration complex subunit RuvA (203 aa).

A domain I region spans residues 1–63 (MIVSLRGTVE…EESQTLYGFT (63 aa)). Residues 64-142 (DDASRRMFVL…GFNDGIPAAA (79 aa)) are domain II. A flexible linker region spans residues 143 to 150 (QPQLSIAV). A domain III region spans residues 150–203 (VDQAVQEQVLEALVGLGFSEKIALPVLSRVLRDSPELSKSQALRAALSELGTKN).

It belongs to the RuvA family. As to quaternary structure, homotetramer. Forms an RuvA(8)-RuvB(12)-Holliday junction (HJ) complex. HJ DNA is sandwiched between 2 RuvA tetramers; dsDNA enters through RuvA and exits via RuvB. An RuvB hexamer assembles on each DNA strand where it exits the tetramer. Each RuvB hexamer is contacted by two RuvA subunits (via domain III) on 2 adjacent RuvB subunits; this complex drives branch migration. In the full resolvosome a probable DNA-RuvA(4)-RuvB(12)-RuvC(2) complex forms which resolves the HJ.

The protein resides in the cytoplasm. The RuvA-RuvB-RuvC complex processes Holliday junction (HJ) DNA during genetic recombination and DNA repair, while the RuvA-RuvB complex plays an important role in the rescue of blocked DNA replication forks via replication fork reversal (RFR). RuvA specifically binds to HJ cruciform DNA, conferring on it an open structure. The RuvB hexamer acts as an ATP-dependent pump, pulling dsDNA into and through the RuvAB complex. HJ branch migration allows RuvC to scan DNA until it finds its consensus sequence, where it cleaves and resolves the cruciform DNA. The sequence is that of Holliday junction branch migration complex subunit RuvA from Corynebacterium diphtheriae (strain ATCC 700971 / NCTC 13129 / Biotype gravis).